We begin with the raw amino-acid sequence, 564 residues long: Iron-sensing transcriptional repressor (564 aa).

The segment at 12–36 (CSNCHKTTTSLWRRGPDNSLLCNAC) adopts a GATA-type 1 zinc-finger fold. Residues 100–170 (ASKSQSGRKS…SSPPHEPSVT (71 aa)) are disordered. At serine 109 the chain carries Phosphoserine. Positions 109-120 (SLSPNPSSVPSS) are enriched in low complexity. A compositionally biased stretch (polar residues) spans 135–148 (QIVSDTTTETSNGT). The segment at 172–196 (CQNCATTNTPLWRRDESGNPICNAC) adopts a GATA-type 2 zinc-finger fold. Disordered stretches follow at residues 226 to 285 (GNAN…NTGV), 381 to 409 (DSSK…NPLG), and 443 to 496 (LLNP…VQGS). 4 stretches are compositionally biased toward polar residues: residues 240-253 (SGDS…QSTR), 260-271 (SFPNGNGHASGN), 381-407 (DSSK…QSNP), and 450-486 (PSNS…SPVS).

Interacts with tup11.

The protein resides in the nucleus. Activated by iron. Transcriptional repressor that binds the consensus promoter sequence 5'-[AT]GATAA-3' during iron-replete conditions to down-regulate transcription of target genes. Represses the expression of the iron transporter fio1 in response to high iron concentrations. Also represses the expression of str1, str2 and str3. Represses the expression of shu1 in presence of iron. This Schizosaccharomyces pombe (strain 972 / ATCC 24843) (Fission yeast) protein is Iron-sensing transcriptional repressor.